We begin with the raw amino-acid sequence, 170 residues long: Mitochondrial fission 1 protein A (170 aa).

The TPR repeat unit spans residues 90–123 (REKLYLLAVGYYRSGNYSRSRQLVDRCIEMQADW). Residues 142-162 (VIGIGITATAFGAVGLIAGGI) form a helical membrane-spanning segment.

The protein belongs to the FIS1 family. In terms of assembly, interacts with ARC5.

It is found in the mitochondrion outer membrane. The protein localises to the peroxisome membrane. Functionally, component of the peroxisomal and mitochondrial division machineries. Plays a role in promoting the fission of mitochondria and peroxisomes. The sequence is that of Mitochondrial fission 1 protein A (FIS1A) from Arabidopsis thaliana (Mouse-ear cress).